We begin with the raw amino-acid sequence, 175 residues long: Thioredoxin-like protein CITRX, chloroplastic (175 aa).

The N-terminal 73 residues, 1-73 (MQAASLAFHP…REDYLVKKLS (73 aa)), are a transit peptide targeting the chloroplast. Positions 74–175 (AKEIQELIKG…MMRDIINNDL (102 aa)) constitute a Thioredoxin domain. Active-site nucleophile residues include Cys-98 and Cys-101. Residues Cys-98 and Cys-101 are joined by a disulfide bond.

This sequence belongs to the thioredoxin family. Plant CITRX-type subfamily.

It is found in the plastid. It localises to the chloroplast. In terms of biological role, probable thiol-disulfide oxidoreductase that may play a role in proper chloroplast development. The chain is Thioredoxin-like protein CITRX, chloroplastic from Solanum tuberosum (Potato).